A 410-amino-acid polypeptide reads, in one-letter code: Cytochrome P450 CYP107DY1 (410 aa).

Heme contacts are provided by His106 and Arg110. The substrate site is built by Thr249 and Glu253. Positions 302, 358, and 360 each coordinate heme.

This sequence belongs to the cytochrome P450 family. Heme serves as cofactor.

It carries out the reaction mevastatin + 2 reduced [2Fe-2S]-[ferredoxin] + O2 + 2 H(+) = pravastatin lactone + 2 oxidized [2Fe-2S]-[ferredoxin] + H2O. Cytochrome P450 whose physiological substrate is unknown. In vitro, is able to catalyze the selective hydroxylation of mevastatin to pravastatin, the widely used therapeutic agent for hypercholesterolemia. The polypeptide is Cytochrome P450 CYP107DY1 (Priestia megaterium (strain ATCC 12872 / QMB1551) (Bacillus megaterium)).